The following is an 831-amino-acid chain: DNA polymerase I, thermostable (831 aa).

The 5'-3' exonuclease domain maps to 174–258 (RPEQWVDYRA…TDLPLEVDFG (85 aa)). The polymerase stretch occupies residues 409-831 (ERLFQTLKER…LGEDWLSAKE (423 aa)).

Belongs to the DNA polymerase type-A family.

The catalysed reaction is DNA(n) + a 2'-deoxyribonucleoside 5'-triphosphate = DNA(n+1) + diphosphate. In terms of biological role, in addition to polymerase activity, this DNA polymerase exhibits 5'-3' exonuclease activity. The sequence is that of DNA polymerase I, thermostable (polA) from Thermus thermophilus.